A 124-amino-acid chain; its full sequence is MPTIQQLVRSERHKSSKKTKSPALKGCPQRRGVCTRVYTTTPKKPNSALRKVARVRLTSGFEVTAYIPGIGHNIQEHSVVLIRGGRVKDLPGVRYHIVRGILDASGVKDRKKSRSKYGAKQPKT.

Disordered regions lie at residues 1-28 and 104-124; these read MPTIQQLVRSERHKSSKKTKSPALKGCP and ASGVKDRKKSRSKYGAKQPKT. 2 stretches are compositionally biased toward basic residues: residues 11–20 and 109–124; these read ERHKSSKKTK and DRKKSRSKYGAKQPKT.

Belongs to the universal ribosomal protein uS12 family. In terms of assembly, part of the 30S ribosomal subunit.

The protein localises to the plastid. The protein resides in the chloroplast. With S4 and S5 plays an important role in translational accuracy. Located at the interface of the 30S and 50S subunits. In Gracilaria tenuistipitata var. liui (Red alga), this protein is Small ribosomal subunit protein uS12c (rps12).